The primary structure comprises 245 residues: Biosynthetic peptidoglycan transglycosylase (245 aa).

The chain crosses the membrane as a helical span at residues 20 to 42 (VYAGSVFAGAWLATQLFYLAQIA).

The protein belongs to the glycosyltransferase 51 family.

The protein localises to the cell inner membrane. It catalyses the reaction [GlcNAc-(1-&gt;4)-Mur2Ac(oyl-L-Ala-gamma-D-Glu-L-Lys-D-Ala-D-Ala)](n)-di-trans,octa-cis-undecaprenyl diphosphate + beta-D-GlcNAc-(1-&gt;4)-Mur2Ac(oyl-L-Ala-gamma-D-Glu-L-Lys-D-Ala-D-Ala)-di-trans,octa-cis-undecaprenyl diphosphate = [GlcNAc-(1-&gt;4)-Mur2Ac(oyl-L-Ala-gamma-D-Glu-L-Lys-D-Ala-D-Ala)](n+1)-di-trans,octa-cis-undecaprenyl diphosphate + di-trans,octa-cis-undecaprenyl diphosphate + H(+). It functions in the pathway cell wall biogenesis; peptidoglycan biosynthesis. In terms of biological role, peptidoglycan polymerase that catalyzes glycan chain elongation from lipid-linked precursors. The protein is Biosynthetic peptidoglycan transglycosylase of Burkholderia orbicola (strain MC0-3).